Reading from the N-terminus, the 503-residue chain is Cytochrome P450 11B1, mitochondrial (503 aa).

The N-terminal 24 residues, 1–24, are a transit peptide targeting the mitochondrion; the sequence is MALRAKAEVCMAAPWLSLQRARAL. Residue Cys-450 participates in heme binding.

It belongs to the cytochrome P450 family. The cofactor is heme.

It localises to the mitochondrion inner membrane. The catalysed reaction is a steroid + 2 reduced [adrenodoxin] + O2 + 2 H(+) = an 11beta-hydroxysteroid + 2 oxidized [adrenodoxin] + H2O. The enzyme catalyses 11-deoxycortisol + 2 reduced [adrenodoxin] + O2 + 2 H(+) = cortisol + 2 oxidized [adrenodoxin] + H2O. It catalyses the reaction 21-hydroxyprogesterone + 2 reduced [adrenodoxin] + O2 + 2 H(+) = corticosterone + 2 oxidized [adrenodoxin] + H2O. It carries out the reaction 21-hydroxyprogesterone + 2 reduced [adrenodoxin] + O2 + 2 H(+) = 18-hydroxy-11-deoxycorticosterone + 2 oxidized [adrenodoxin] + H2O. The catalysed reaction is 21-hydroxyprogesterone + 2 reduced [adrenodoxin] + O2 + 2 H(+) = 19-hydroxy-11-deoxycorticosterone + 2 oxidized [adrenodoxin] + H2O. The enzyme catalyses cortisol + 2 reduced [adrenodoxin] + O2 + 2 H(+) = 18-hydroxycortisol + 2 oxidized [adrenodoxin] + H2O. It catalyses the reaction 11-deoxycortisol + 2 reduced [adrenodoxin] + O2 + 2 H(+) = 18-hydroxy-11-deoxycortisol + 2 oxidized [adrenodoxin] + H2O. It functions in the pathway steroid biosynthesis; glucocorticoid biosynthesis. Its pathway is steroid hormone biosynthesis. Its function is as follows. A cytochrome P450 monooxygenase involved in the biosynthesis of adrenal corticoids. Catalyzes a variety of reactions that are essential for many species, including detoxification, defense, and the formation of endogenous chemicals like steroid hormones. Steroid 11beta, 18- and 19-hydroxylase with preferred regioselectivity at 11beta, then 18, and lastly 19. Catalyzes the hydroxylation of 11-deoxycortisol and 11-deoxycorticosterone (21-hydroxyprogesterone) at 11beta position, yielding cortisol or corticosterone, respectively, but cannot produce aldosterone. Mechanistically, uses molecular oxygen inserting one oxygen atom into a substrate for hydroxylation and reducing the second into a water molecule. Two electrons are provided by NADPH via a two-protein mitochondrial transfer system comprising flavoprotein FDXR (adrenodoxin/ferredoxin reductase) and nonheme iron-sulfur protein FDX1 or FDX2 (adrenodoxin/ferredoxin). Due to its lack of 18-oxidation activity, it is incapable of generating aldosterone. Could also be involved in the androgen metabolic pathway. The polypeptide is Cytochrome P450 11B1, mitochondrial (CYP11B1) (Papio hamadryas ursinus (Chacma baboon)).